We begin with the raw amino-acid sequence, 289 residues long: NAD(P)H-hydrate epimerase (289 aa).

Residues 71 to 277 enclose the YjeF N-terminal domain; the sequence is AQTIDNELMS…SIVEKYNLKI (207 aa). 122–126 contacts (6S)-NADPHX; that stretch reads NNGGD. Asn123 and Asp185 together coordinate K(+). Residues 189–195 and Asp218 each bind (6S)-NADPHX; that span reads GFSFRGE. A K(+)-binding site is contributed by Ser221.

It belongs to the NnrE/AIBP family. K(+) is required as a cofactor.

The enzyme catalyses (6R)-NADHX = (6S)-NADHX. It carries out the reaction (6R)-NADPHX = (6S)-NADPHX. Its function is as follows. Catalyzes the epimerization of the S- and R-forms of NAD(P)HX, a damaged form of NAD(P)H that is a result of enzymatic or heat-dependent hydration. This is a prerequisite for the S-specific NAD(P)H-hydrate dehydratase to allow the repair of both epimers of NAD(P)HX. The chain is NAD(P)H-hydrate epimerase from Plasmodium knowlesi (strain H).